An 83-amino-acid chain; its full sequence is Large ribosomal subunit protein bL31 (83 aa).

Belongs to the bacterial ribosomal protein bL31 family. Type A subfamily. In terms of assembly, part of the 50S ribosomal subunit.

Binds the 23S rRNA. The polypeptide is Large ribosomal subunit protein bL31 (Synechococcus sp. (strain CC9605)).